We begin with the raw amino-acid sequence, 493 residues long: MRMLLGIPYVDKSVLSNSVLERGKQDKSKLLLVDKCHYELDVEERKEDFVGGFGFGVVENSHKDVMVLPHHHYYPSYSSPSSSSLCYCSAGVSDPMFSVSSNQAYTSSHSGMFTPAGSGSAAVTVADPFFSLSSSGEMRRSMNEDAGAAFSEAQWHELERQRNIYKYMMASVPVPPELLTPFPKNHQSNTNPDVDTYRSGMFSIYADYKNLPLSMWMTVTVAVATGGSLQLGIASSASNNTADLEPWRCKRTDGKKWRCSRNVIPDQKYCERHTHKSRPRSRKHVESSHQSSHHNDIRTAKNDTSQLVRTYPQFYGQPISQIPVLSTLPSASSPYDHHRGLRWFTKEDDAIGTLNPETQEAVQLKVGSSRELKRGFDYDLNFRQKEPIVDQSFGALQGLLSLNQTPQHNQETRQFVVEGKQDEAMGSSLTLSMAGGGMEETEGTNQHQWVSHEGPSWLYSTTPGGPLAEALCLGVSNNPSSSTTTSSCSRSSS.

In terms of domain architecture, QLQ spans 149–184; it reads AFSEAQWHELERQRNIYKYMMASVPVPPELLTPFPK. The region spanning 243-287 is the WRC domain; sequence DLEPWRCKRTDGKKWRCSRNVIPDQKYCERHTHKSRPRSRKHVES. 2 consecutive short sequence motifs (bipartite nuclear localization signal) follow at residues 248-258 and 276-283; these read RCKRTDGKKWR and KSRPRSRK. Residues 270 to 302 are disordered; the sequence is CERHTHKSRPRSRKHVESSHQSSHHNDIRTAKN. Basic residues predominate over residues 273 to 283; sequence HTHKSRPRSRK.

This sequence belongs to the GRF family. Predominantly expressed in shoot tips and flowers.

The protein localises to the nucleus. Transcription activator that plays a role in the regulation of cell expansion in leaf and cotyledons tissues. Component of a network formed by miR396, the GRFs and their interacting factors (GIFs) acting in the regulation of meristem function, at least partially through the control of cell proliferation. This chain is Growth-regulating factor 8 (GRF8), found in Arabidopsis thaliana (Mouse-ear cress).